The primary structure comprises 315 residues: L-lactate dehydrogenase (315 aa).

NAD(+)-binding positions include V17, D38, K43, Y69, and 83 to 84; that span reads GA. The substrate site is built by Q86 and R92. NAD(+) is bound by residues S105, 122–124, and S147; that span reads ATN. 124-127 contacts substrate; the sequence is NPVD. 152-155 is a binding site for substrate; sequence DTAR. Beta-D-fructose 1,6-bisphosphate-binding residues include R157 and H172. Catalysis depends on H179, which acts as the Proton acceptor. Y223 carries the phosphotyrosine modification. Substrate is bound at residue T232.

Belongs to the LDH/MDH superfamily. LDH family. Homotetramer.

The protein resides in the cytoplasm. It catalyses the reaction (S)-lactate + NAD(+) = pyruvate + NADH + H(+). It participates in fermentation; pyruvate fermentation to lactate; (S)-lactate from pyruvate: step 1/1. Its activity is regulated as follows. Allosterically activated by fructose 1,6-bisphosphate (FBP). In terms of biological role, catalyzes the conversion of lactate to pyruvate. This Macrococcus caseolyticus (strain JCSC5402) (Macrococcoides caseolyticum) protein is L-lactate dehydrogenase.